Consider the following 358-residue polypeptide: tRNA-specific 2-thiouridylase MnmA (358 aa).

ATP-binding positions include 8–15 (AMSGGVDS) and methionine 35. The segment at 95–97 (NPD) is interaction with target base in tRNA. The active-site Nucleophile is cysteine 100. Cysteine 100 and cysteine 194 are disulfide-bonded. Position 124 (glycine 124) interacts with ATP. The interval 144–146 (KDQ) is interaction with tRNA. Catalysis depends on cysteine 194, which acts as the Cysteine persulfide intermediate. Positions 301–302 (RY) are interaction with tRNA.

Belongs to the MnmA/TRMU family.

The protein localises to the cytoplasm. The enzyme catalyses S-sulfanyl-L-cysteinyl-[protein] + uridine(34) in tRNA + AH2 + ATP = 2-thiouridine(34) in tRNA + L-cysteinyl-[protein] + A + AMP + diphosphate + H(+). Functionally, catalyzes the 2-thiolation of uridine at the wobble position (U34) of tRNA, leading to the formation of s(2)U34. This chain is tRNA-specific 2-thiouridylase MnmA, found in Chlamydia trachomatis serovar L2 (strain ATCC VR-902B / DSM 19102 / 434/Bu).